A 373-amino-acid chain; its full sequence is Maltose/maltodextrin import ATP-binding protein MalK (373 aa).

The region spanning 4-234 (VTLKNVCKAY…PQNRFVAGFI (231 aa)) is the ABC transporter domain. Position 36 to 43 (36 to 43 (GPSGCGKS)) interacts with ATP.

It belongs to the ABC transporter superfamily. Maltooligosaccharide importer (TC 3.A.1.1.1) family. As to quaternary structure, the complex is composed of two ATP-binding proteins (MalK), two transmembrane proteins (MalG and MalK) and a solute-binding protein (MalE).

It is found in the cell inner membrane. It carries out the reaction D-maltose(out) + ATP + H2O = D-maltose(in) + ADP + phosphate + H(+). Part of the ABC transporter complex MalEFGK involved in maltose/maltodextrin import. Responsible for energy coupling to the transport system. In Vibrio cholerae serotype O1 (strain ATCC 39315 / El Tor Inaba N16961), this protein is Maltose/maltodextrin import ATP-binding protein MalK.